A 213-amino-acid polypeptide reads, in one-letter code: tRNA (guanine-N(7)-)-methyltransferase (213 aa).

Residues Glu44, Glu69, Asn96, and Asp118 each coordinate S-adenosyl-L-methionine. Residue Asp118 is part of the active site. Position 122 (Lys122) interacts with substrate. The interval 124–129 (RHEKRR) is interaction with RNA. Residues Asp154 and 191–194 (TEYE) each bind substrate.

This sequence belongs to the class I-like SAM-binding methyltransferase superfamily. TrmB family.

The enzyme catalyses guanosine(46) in tRNA + S-adenosyl-L-methionine = N(7)-methylguanosine(46) in tRNA + S-adenosyl-L-homocysteine. Its pathway is tRNA modification; N(7)-methylguanine-tRNA biosynthesis. Functionally, catalyzes the formation of N(7)-methylguanine at position 46 (m7G46) in tRNA. This Bacillus licheniformis (strain ATCC 14580 / DSM 13 / JCM 2505 / CCUG 7422 / NBRC 12200 / NCIMB 9375 / NCTC 10341 / NRRL NRS-1264 / Gibson 46) protein is tRNA (guanine-N(7)-)-methyltransferase.